The following is a 228-amino-acid chain: PKHD-type hydroxylase RPE_4577 (228 aa).

The 103-residue stretch at 78-180 (TIFPPLFNRY…RIASFFWTQS (103 aa)) folds into the Fe2OG dioxygenase domain. Positions 98, 100, and 161 each coordinate Fe cation. A 2-oxoglutarate-binding site is contributed by arginine 171.

Fe(2+) serves as cofactor. Requires L-ascorbate as cofactor.

This Rhodopseudomonas palustris (strain BisA53) protein is PKHD-type hydroxylase RPE_4577.